The sequence spans 167 residues: Arginine repressor (167 aa).

This sequence belongs to the ArgR family.

It localises to the cytoplasm. The protein operates within amino-acid biosynthesis; L-arginine biosynthesis [regulation]. In terms of biological role, regulates arginine biosynthesis genes. The protein is Arginine repressor of Mycobacterium leprae (strain Br4923).